The primary structure comprises 580 residues: Lysine--tRNA ligase (580 aa).

The 'HIGH' region signature appears at 43 to 51 (PSGPIHLGN). The segment at 178–209 (KAPAKKSQKPLDEAELEAAEGSGAAAEDDGSS) is disordered. The segment covering 196-209 (AEGSGAAAEDDGSS) has biased composition (low complexity). A 'KMSKS' region motif is present at residues 325-329 (KMSSS).

The protein belongs to the class-I aminoacyl-tRNA synthetase family.

It localises to the cytoplasm. It carries out the reaction tRNA(Lys) + L-lysine + ATP = L-lysyl-tRNA(Lys) + AMP + diphosphate. The sequence is that of Lysine--tRNA ligase (lysS) from Streptomyces coelicolor (strain ATCC BAA-471 / A3(2) / M145).